The chain runs to 452 residues: tRNA modification GTPase MnmE (452 aa).

(6S)-5-formyl-5,6,7,8-tetrahydrofolate is bound by residues arginine 21, glutamate 78, and lysine 118. Residues 214-375 (GMKVVIAGRP…LREHLKKSMG (162 aa)) enclose the TrmE-type G domain. Asparagine 224 is a binding site for K(+). GTP contacts are provided by residues 224–229 (NAGKSS), 243–249 (TNIAGTT), and 268–271 (DTAG). Serine 228 is a Mg(2+) binding site. Threonine 243, isoleucine 245, and threonine 248 together coordinate K(+). Mg(2+) is bound at residue threonine 249. Lysine 452 lines the (6S)-5-formyl-5,6,7,8-tetrahydrofolate pocket.

It belongs to the TRAFAC class TrmE-Era-EngA-EngB-Septin-like GTPase superfamily. TrmE GTPase family. In terms of assembly, homodimer. Heterotetramer of two MnmE and two MnmG subunits. K(+) serves as cofactor.

The protein localises to the cytoplasm. Exhibits a very high intrinsic GTPase hydrolysis rate. Involved in the addition of a carboxymethylaminomethyl (cmnm) group at the wobble position (U34) of certain tRNAs, forming tRNA-cmnm(5)s(2)U34. The protein is tRNA modification GTPase MnmE of Actinobacillus pleuropneumoniae serotype 3 (strain JL03).